We begin with the raw amino-acid sequence, 367 residues long: Tetraacyldisaccharide 4'-kinase (367 aa).

68-75 (VLGGSGKT) is a binding site for ATP.

It belongs to the LpxK family.

It catalyses the reaction a lipid A disaccharide + ATP = a lipid IVA + ADP + H(+). Its pathway is glycolipid biosynthesis; lipid IV(A) biosynthesis; lipid IV(A) from (3R)-3-hydroxytetradecanoyl-[acyl-carrier-protein] and UDP-N-acetyl-alpha-D-glucosamine: step 6/6. Functionally, transfers the gamma-phosphate of ATP to the 4'-position of a tetraacyldisaccharide 1-phosphate intermediate (termed DS-1-P) to form tetraacyldisaccharide 1,4'-bis-phosphate (lipid IVA). This Chlamydia abortus (strain DSM 27085 / S26/3) (Chlamydophila abortus) protein is Tetraacyldisaccharide 4'-kinase.